Here is a 343-residue protein sequence, read N- to C-terminus: Phenylalanine--tRNA ligase alpha subunit (343 aa).

Glu-256 contacts Mg(2+).

This sequence belongs to the class-II aminoacyl-tRNA synthetase family. Phe-tRNA synthetase alpha subunit type 1 subfamily. As to quaternary structure, tetramer of two alpha and two beta subunits. It depends on Mg(2+) as a cofactor.

Its subcellular location is the cytoplasm. The catalysed reaction is tRNA(Phe) + L-phenylalanine + ATP = L-phenylalanyl-tRNA(Phe) + AMP + diphosphate + H(+). This Prosthecochloris aestuarii (strain DSM 271 / SK 413) protein is Phenylalanine--tRNA ligase alpha subunit.